The primary structure comprises 572 residues: Dihydroxy-acid dehydratase (572 aa).

Cys57 lines the [2Fe-2S] cluster pocket. Asp89 is a binding site for Mg(2+). [2Fe-2S] cluster is bound at residue Cys130. Residues Asp131 and Lys132 each contribute to the Mg(2+) site. Lys132 carries the N6-carboxylysine modification. Cys202 contacts [2Fe-2S] cluster. Glu453 contributes to the Mg(2+) binding site. Ser479 functions as the Proton acceptor in the catalytic mechanism.

The protein belongs to the IlvD/Edd family. In terms of assembly, homodimer. [2Fe-2S] cluster is required as a cofactor. Requires Mg(2+) as cofactor.

The catalysed reaction is (2R)-2,3-dihydroxy-3-methylbutanoate = 3-methyl-2-oxobutanoate + H2O. It catalyses the reaction (2R,3R)-2,3-dihydroxy-3-methylpentanoate = (S)-3-methyl-2-oxopentanoate + H2O. Its pathway is amino-acid biosynthesis; L-isoleucine biosynthesis; L-isoleucine from 2-oxobutanoate: step 3/4. It functions in the pathway amino-acid biosynthesis; L-valine biosynthesis; L-valine from pyruvate: step 3/4. Functionally, functions in the biosynthesis of branched-chain amino acids. Catalyzes the dehydration of (2R,3R)-2,3-dihydroxy-3-methylpentanoate (2,3-dihydroxy-3-methylvalerate) into 2-oxo-3-methylpentanoate (2-oxo-3-methylvalerate) and of (2R)-2,3-dihydroxy-3-methylbutanoate (2,3-dihydroxyisovalerate) into 2-oxo-3-methylbutanoate (2-oxoisovalerate), the penultimate precursor to L-isoleucine and L-valine, respectively. This chain is Dihydroxy-acid dehydratase, found in Streptococcus sanguinis (strain SK36).